The primary structure comprises 196 residues: dTTP/UTP pyrophosphatase (196 aa).

Catalysis depends on Asp72, which acts as the Proton acceptor.

This sequence belongs to the Maf family. YhdE subfamily. The cofactor is a divalent metal cation.

The protein localises to the cytoplasm. The catalysed reaction is dTTP + H2O = dTMP + diphosphate + H(+). The enzyme catalyses UTP + H2O = UMP + diphosphate + H(+). In terms of biological role, nucleoside triphosphate pyrophosphatase that hydrolyzes dTTP and UTP. May have a dual role in cell division arrest and in preventing the incorporation of modified nucleotides into cellular nucleic acids. The chain is dTTP/UTP pyrophosphatase from Chlamydia trachomatis serovar L2 (strain ATCC VR-902B / DSM 19102 / 434/Bu).